Consider the following 299-residue polypeptide: Probable inactive heme oxygenase 2, chloroplastic (299 aa).

The segment covering 1 to 15 has biased composition (low complexity); that stretch reads MASLLRPTPLLSTPR. 3 disordered regions span residues 1-20, 45-70, and 96-126; these read MASLLRPTPLLSTPRKLTHS, LCRSTPTPSQQKASQRKRTRYRKQYP, and DLSEDKTDTEKEEEEEEEDDDDDDEVKEETW. A chloroplast-targeting transit peptide spans 1-83; that stretch reads MASLLRPTPL…IGITEEMRFV (83 aa). Residues 46-57 show a composition bias toward polar residues; the sequence is CRSTPTPSQQKA. Residues 58–67 are compositionally biased toward basic residues; the sequence is SQRKRTRYRK. Residues 105–122 show a composition bias toward acidic residues; sequence EKEEEEEEEDDDDDDEVK.

Belongs to the heme oxygenase family. In terms of tissue distribution, widely expressed at low levels.

Its subcellular location is the plastid. The protein resides in the chloroplast. Probable inactive heme oxygenase. Binds protoporphyrin IX, a precursor for both heme and chlorophyll biosynthesis. Plays a minor role in phytochrome assembly and photomorphogenesis. In Arabidopsis thaliana (Mouse-ear cress), this protein is Probable inactive heme oxygenase 2, chloroplastic (HO2).